The chain runs to 162 residues: Caveolin-2 (162 aa).

The Cytoplasmic segment spans residues 1–86 (MGLETEKADV…FEISKYVMYK (86 aa)). Tyrosine 19 carries the phosphotyrosine; by SRC modification. A phosphoserine mark is found at serine 20 and serine 23. Tyrosine 27 bears the Phosphotyrosine; by SRC mark. Serine 36 carries the phosphoserine modification. The helical intramembrane region spans 87–107 (FLTVFLSIPLAFLAGILFATL). Over 108–162 (SCLHIWIIMPFVKTCLMVLPSVQTIWKSVTDAIIAPLCTSIGRSFSSVSLQLSHD) the chain is Cytoplasmic.

It belongs to the caveolin family. In terms of assembly, monomer or homodimer. Interacts with CAV1; the interaction forms a stable heterooligomeric complex that is required for targeting to lipid rafts and for caveolae formation. Tyrosine phosphorylated forms do not form heterooligomers with the Tyr-19-phosphorylated form existing as a monomer or dimer, and the Tyr-27-form as a monomer only. Interacts (tyrosine phosphorylated form) with the SH2 domain-containing proteins, RASA1, NCK1 and SRC. Interacts (tyrosine phosphorylated form) with INSR, the interaction (Tyr-27-phosphorylated form) is increased on insulin stimulation. Interacts (Tyr-19 phosphorylated form) with MAPK1 (phosphorylated form); the interaction, promoted by insulin, leads to nuclear location and MAPK1 activation. Interacts with STAT3; the interaction is increased on insulin-induced tyrosine phosphorylation leading to STAT activation. In terms of processing, phosphorylated on serine and tyrosine residues. CAV1 promotes phosphorylation on Ser-23 which then targets the complex to the plasma membrane, lipid rafts and caveolae. Phosphorylation on Ser-36 appears to modulate mitosis in endothelial cells. Phosphorylation on both Tyr-19 and Tyr-27 is required for insulin-induced 'Ser-727' phosphorylation of STAT3 and its activation. Phosphorylation on Tyr-19 is required for insulin-induced phosphorylation of MAPK1 and DNA binding of STAT3. Tyrosine phosphorylation is induced by both EGF and insulin (By. similarity).

It localises to the nucleus. The protein localises to the cytoplasm. Its subcellular location is the golgi apparatus membrane. The protein resides in the cell membrane. It is found in the membrane. It localises to the caveola. Functionally, may act as a scaffolding protein within caveolar membranes. Interacts directly with G-protein alpha subunits and can functionally regulate their activity. Acts as an accessory protein in conjunction with CAV1 in targeting to lipid rafts and driving caveolae formation. The Ser-36 phosphorylated form has a role in modulating mitosis in endothelial cells. Positive regulator of cellular mitogenesis of the MAPK signaling pathway. Required for the insulin-stimulated nuclear translocation and activation of MAPK1 and STAT3, and the subsequent regulation of cell cycle progression. In Saimiri boliviensis boliviensis (Bolivian squirrel monkey), this protein is Caveolin-2 (CAV2).